A 503-amino-acid chain; its full sequence is Alpha-1B-glycoprotein (503 aa).

An N-terminal signal peptide occupies residues 1-21 (MSAWAALLLLWGLSLSPVTEQ). 5 consecutive Ig-like V-type domains span residues 27–115 (PRPS…EVTG), 117–204 (EPLP…TVTI), 208–305 (DPPP…LVLS), 307–405 (GTLP…LRVD), and 406–501 (GPLP…LRVA). An intrachain disulfide couples cysteine 49 to cysteine 96. N-linked (GlcNAc...) asparagine glycosylation is found at asparagine 137 and asparagine 182. 4 disulfides stabilise this stretch: cysteine 142–cysteine 185, cysteine 235–cysteine 282, cysteine 333–cysteine 382, and cysteine 431–cysteine 478. Asparagine 379 carries an N-linked (GlcNAc...) asparagine glycan.

As to quaternary structure, interacts with CRISP3. As to expression, plasma.

It is found in the secreted. The sequence is that of Alpha-1B-glycoprotein from Bos taurus (Bovine).